Here is a 316-residue protein sequence, read N- to C-terminus: Protoheme IX farnesyltransferase (316 aa).

Transmembrane regions (helical) follow at residues 32-52 (VMSL…GHIN), 53-73 (PVLG…SGAL), 93-113 (IPAG…LSGF), 116-136 (VILG…TIFF), 152-172 (NIVI…ACVT), 180-200 (TVLF…LALF), 221-241 (VTKH…VLPS), 252-271 (LVAA…VWRM), and 289-309 (IFYL…AILV).

It belongs to the UbiA prenyltransferase family. Protoheme IX farnesyltransferase subfamily.

It localises to the cell inner membrane. It carries out the reaction heme b + (2E,6E)-farnesyl diphosphate + H2O = Fe(II)-heme o + diphosphate. It functions in the pathway porphyrin-containing compound metabolism; heme O biosynthesis; heme O from protoheme: step 1/1. Converts heme B (protoheme IX) to heme O by substitution of the vinyl group on carbon 2 of heme B porphyrin ring with a hydroxyethyl farnesyl side group. This chain is Protoheme IX farnesyltransferase, found in Rhizobium etli (strain ATCC 51251 / DSM 11541 / JCM 21823 / NBRC 15573 / CFN 42).